Consider the following 112-residue polypeptide: T cell receptor alpha variable 41 (112 aa).

The N-terminal stretch at 1 to 21 (MVKIRQFLLAILWLQLSCVSA) is a signal peptide. An Ig-like domain is found at 24-112 (NEVEQSPQNL…DSAVYICAVR (89 aa)). 2 N-linked (GlcNAc...) asparagine glycosylation sites follow: asparagine 32 and asparagine 44. A disulfide bond links cysteine 45 and cysteine 109.

As to quaternary structure, alpha-beta TR is a heterodimer composed of an alpha and beta chain; disulfide-linked. The alpha-beta TR is associated with the transmembrane signaling CD3 coreceptor proteins to form the TR-CD3 (TcR or TCR). The assembly of alpha-beta TR heterodimers with CD3 occurs in the endoplasmic reticulum where a single alpha-beta TR heterodimer associates with one CD3D-CD3E heterodimer, one CD3G-CD3E heterodimer and one CD247 homodimer forming a stable octameric structure. CD3D-CD3E and CD3G-CD3E heterodimers preferentially associate with TR alpha and TR beta chains, respectively. The association of the CD247 homodimer is the last step of TcR assembly in the endoplasmic reticulum and is required for transport to the cell surface.

It is found in the cell membrane. In terms of biological role, v region of the variable domain of T cell receptor (TR) alpha chain that participates in the antigen recognition. Alpha-beta T cell receptors are antigen specific receptors which are essential to the immune response and are present on the cell surface of T lymphocytes. Recognize peptide-major histocompatibility (MH) (pMH) complexes that are displayed by antigen presenting cells (APC), a prerequisite for efficient T cell adaptive immunity against pathogens. Binding of alpha-beta TR to pMH complex initiates TR-CD3 clustering on the cell surface and intracellular activation of LCK that phosphorylates the ITAM motifs of CD3G, CD3D, CD3E and CD247 enabling the recruitment of ZAP70. In turn ZAP70 phosphorylates LAT, which recruits numerous signaling molecules to form the LAT signalosome. The LAT signalosome propagates signal branching to three major signaling pathways, the calcium, the mitogen-activated protein kinase (MAPK) kinase and the nuclear factor NF-kappa-B (NF-kB) pathways, leading to the mobilization of transcription factors that are critical for gene expression and essential for T cell growth and differentiation. The T cell repertoire is generated in the thymus, by V-(D)-J rearrangement. This repertoire is then shaped by intrathymic selection events to generate a peripheral T cell pool of self-MH restricted, non-autoaggressive T cells. Post-thymic interaction of alpha-beta TR with the pMH complexes shapes TR structural and functional avidity. In Homo sapiens (Human), this protein is T cell receptor alpha variable 41.